A 1334-amino-acid chain; its full sequence is Putative transmembrane protein ORF1334 (1334 aa).

A helical transmembrane segment spans residues 53 to 73 (VSIVVLVLTLFIIPVIIPPAH). Residues 1107 to 1135 (LSASTTPPSSTTPTPPSSSSSSSSSSSIS) are disordered. The segment covering 1110–1135 (STTPPSSTTPTPPSSSSSSSSSSSIS) has biased composition (low complexity). 3 consecutive transmembrane segments (helical) span residues 1256-1276 (AVLP…SFFI), 1292-1312 (IIYI…TSVV), and 1313-1333 (YGTV…SRSQ).

It localises to the host membrane. The polypeptide is Putative transmembrane protein ORF1334 (Acidianus two-tailed virus (ATV)).